The following is a 272-amino-acid chain: Hydroxyethylthiazole kinase (272 aa).

Position 46 (Met46) interacts with substrate. 2 residues coordinate ATP: Arg122 and Thr168. A substrate-binding site is contributed by Gly195.

It belongs to the Thz kinase family. Requires Mg(2+) as cofactor.

It catalyses the reaction 5-(2-hydroxyethyl)-4-methylthiazole + ATP = 4-methyl-5-(2-phosphooxyethyl)-thiazole + ADP + H(+). It functions in the pathway cofactor biosynthesis; thiamine diphosphate biosynthesis; 4-methyl-5-(2-phosphoethyl)-thiazole from 5-(2-hydroxyethyl)-4-methylthiazole: step 1/1. In terms of biological role, catalyzes the phosphorylation of the hydroxyl group of 4-methyl-5-beta-hydroxyethylthiazole (THZ). The sequence is that of Hydroxyethylthiazole kinase from Alkaliphilus metalliredigens (strain QYMF).